Reading from the N-terminus, the 745-residue chain is MSDKDRITQLLRELEEAKAREAQERCEKERLQLEHRKTTFLEYLRNCHRHLYNALRLTDTSRSSTGYTKVVGKYYPKRLRPWTNFTNVLHPHYFNLVQQICGQRQLFESASTTKNLGTIISDHLAGNEKAIDRFEVDAVERPVQGILKVLATHEEAGKASICPEFRFSANLRELTQKDDGSSGADDNTSDRSLERRQQAGPNKRPTSKSKYICSNRQPDGVGIRMQPDGGQTQAFIYDYKAAHKVAIEHVRSATAKEHLFHEVVARINDDKLSRDEEVQHREQAEAFIAMALTQVFDYMITYGVSYGYVAAGRCLLLLYVDRDDWQTLYCHPCLPADDVGEPTNDWTDRLSHTAVAQLVSFCLSSFQSEALEGQSLETALSVAKATLKTWSESYADVAYLGLEPAELSSAPSSQNTDISEYTSKAKPTGRKVTLRSCKPAAVLPQGNEHDEHDEEDHSEPGASRLAKRERGPSSGGKDDGRSMVDPQPTRQYCTQACLLGLKRGKDLDENCPNVSLHRFDGSSRHPVNAHSFTDMVEQQLLLSPYKGCRMVDFWGKRGAMGWLFKLELLPYGYTFVGKGTVEDRLNRLEHEGRVYARLDHLQGDVVPVHLGLVRLDRGYILPGLEFAVYMMLMSWAGQTPSANMDDAETLKSESLTAIWSEGVDHGDNNRANYLWNAERCRIMIIDFDRAHLFPPLKARAVSRLSKPKRKRETLNSYLTEITGREARHVFKQMDRSPMATPSHGG.

Residues 4-34 adopt a coiled-coil conformation; sequence KDRITQLLRELEEAKAREAQERCEKERLQLE. Disordered regions lie at residues 173 to 222 and 407 to 487; these read ELTQ…DGVG and LSSA…VDPQ. Basic and acidic residues predominate over residues 188–197; sequence TSDRSLERRQ. 2 stretches are compositionally biased toward polar residues: residues 208 to 217 and 409 to 422; these read KSKYICSNRQ and SAPS…SEYT. The segment at 214-325 is required for antidote activity; that stretch reads SNRQPDGVGI…LLLYVDRDDW (112 aa). Residues 466-482 are compositionally biased toward basic and acidic residues; the sequence is AKRERGPSSGGKDDGRS. Residues 491–745 form a required for poison activity region; that stretch reads QYCTQACLLG…SPMATPSHGG (255 aa).

The protein resides in the cytoplasm. It is found in the nucleus. Functionally, promotes unequal transmission of alleles from the parental zygote to progeny spores by acting as poison/antidote system, leading to poisoning of progeny that do not inherit the allele. May possess DNA nuclease activity that leads to spore killing, and a kinase activity that confers resistance to the nuclease activity. The polypeptide is Meiotic driver SPOK3 (Podospora anserina (Pleurage anserina)).